A 327-amino-acid chain; its full sequence is Phenylalanine--tRNA ligase alpha subunit (327 aa).

Glu-252 lines the Mg(2+) pocket.

The protein belongs to the class-II aminoacyl-tRNA synthetase family. Phe-tRNA synthetase alpha subunit type 1 subfamily. In terms of assembly, tetramer of two alpha and two beta subunits. Requires Mg(2+) as cofactor.

The protein resides in the cytoplasm. It catalyses the reaction tRNA(Phe) + L-phenylalanine + ATP = L-phenylalanyl-tRNA(Phe) + AMP + diphosphate + H(+). This Aeromonas salmonicida (strain A449) protein is Phenylalanine--tRNA ligase alpha subunit.